The primary structure comprises 109 residues: Nucleoid-associated protein MADE_1013280 (109 aa).

The disordered stretch occupies residues 86 to 109; that stretch reads TSKEKMGDVTGGMPLPPGFKMPGF. Over residues 99-109 the composition is skewed to pro residues; it reads PLPPGFKMPGF.

Belongs to the YbaB/EbfC family. In terms of assembly, homodimer.

The protein resides in the cytoplasm. The protein localises to the nucleoid. Functionally, binds to DNA and alters its conformation. May be involved in regulation of gene expression, nucleoid organization and DNA protection. The sequence is that of Nucleoid-associated protein MADE_1013280 from Alteromonas mediterranea (strain DSM 17117 / CIP 110805 / LMG 28347 / Deep ecotype).